We begin with the raw amino-acid sequence, 122 residues long: MIQMQTILNVADNSGAKEVMCIKVLGGTHHMIAHLGDVIVVSIKSSIPKGKVKKGEVCKALIIRTKCGVTRHDGSNIKFDSNDVVLLNKQGEPFGTRIFGSVPRELRVKNFSKIVSLAEEVL.

The protein belongs to the universal ribosomal protein uL14 family. As to quaternary structure, part of the 50S ribosomal subunit. Forms a cluster with proteins L3 and L19. In the 70S ribosome, L14 and L19 interact and together make contacts with the 16S rRNA in bridges B5 and B8.

Its function is as follows. Binds to 23S rRNA. Forms part of two intersubunit bridges in the 70S ribosome. The sequence is that of Large ribosomal subunit protein uL14 from Orientia tsutsugamushi (strain Ikeda) (Rickettsia tsutsugamushi).